A 190-amino-acid chain; its full sequence is Dirigent protein 15 (190 aa).

The N-terminal stretch at 1-19 is a signal peptide; it reads MKSTLIIFFTLCLSMAVMA. N-linked (GlcNAc...) asparagine glycosylation is found at Asn63 and Asn128.

This sequence belongs to the plant dirigent protein family. In terms of assembly, homodimer.

The protein resides in the secreted. The protein localises to the extracellular space. It is found in the apoplast. Functionally, dirigent proteins impart stereoselectivity on the phenoxy radical-coupling reaction, yielding optically active lignans from two molecules of coniferyl alcohol in the biosynthesis of lignans, flavonolignans, and alkaloids and thus plays a central role in plant secondary metabolism. In Arabidopsis thaliana (Mouse-ear cress), this protein is Dirigent protein 15 (DIR15).